A 439-amino-acid chain; its full sequence is ATP-dependent RNA helicase RhlB (439 aa).

Positions 9–37 (QKFADLPLHPEVKQALAENGFEFCTPIQA) match the Q motif motif. The 180-residue stretch at 40–219 (LPVLLQSKDI…YDHMNEPVKV (180 aa)) folds into the Helicase ATP-binding domain. 53 to 60 (AQTGTGKT) contacts ATP. The DEAD box signature appears at 165-168 (DEAD). Positions 243 to 390 (KMRLLLTLIE…VSNYDRDALL (148 aa)) constitute a Helicase C-terminal domain. Positions 395-439 (PPVKIHRRHPAGARNLRERSGAGRPQGAHRSGGRPPRHDRTRRQP) are disordered. Positions 425 to 439 (SGGRPPRHDRTRRQP) are enriched in basic residues.

The protein belongs to the DEAD box helicase family. RhlB subfamily. In terms of assembly, component of the RNA degradosome, which is a multiprotein complex involved in RNA processing and mRNA degradation.

Its subcellular location is the cytoplasm. The enzyme catalyses ATP + H2O = ADP + phosphate + H(+). Functionally, DEAD-box RNA helicase involved in RNA degradation. Has RNA-dependent ATPase activity and unwinds double-stranded RNA. This Shewanella sp. (strain ANA-3) protein is ATP-dependent RNA helicase RhlB.